The primary structure comprises 159 residues: Urease subunit beta 2 (159 aa).

Positions 1 to 23 (MAKEPTEAAHPQPEQTKTNHKAH) are disordered.

This sequence belongs to the urease beta subunit family. In terms of assembly, heterotrimer of UreA (gamma), UreB (beta) and UreC (alpha) subunits. Three heterotrimers associate to form the active enzyme.

It localises to the cytoplasm. The catalysed reaction is urea + 2 H2O + H(+) = hydrogencarbonate + 2 NH4(+). It participates in nitrogen metabolism; urea degradation; CO(2) and NH(3) from urea (urease route): step 1/1. In Brucella abortus biovar 1 (strain 9-941), this protein is Urease subunit beta 2.